A 264-amino-acid polypeptide reads, in one-letter code: NAD-capped RNA hydrolase NudC (264 aa).

Substrate is bound at residue arginine 70. Residues cysteine 99 and cysteine 102 each coordinate Zn(2+). Glutamate 112 lines the substrate pocket. Residues cysteine 117 and cysteine 120 each coordinate Zn(2+). Residue tyrosine 125 coordinates substrate. Residues 126 to 253 (PVICPSIIVA…TIARKLIHVT (128 aa)) enclose the Nudix hydrolase domain. A divalent metal cation-binding residues include alanine 162, glutamate 178, and glutamate 182. The short motif at 163-184 (GFVEVGETFEQAVQREVFEETG) is the Nudix box element. Residue 196–203 (QPWAFPNS) coordinates substrate. Glutamate 223 provides a ligand contact to a divalent metal cation. A substrate-binding site is contributed by alanine 246.

Belongs to the Nudix hydrolase family. NudC subfamily. In terms of assembly, homodimer. Mg(2+) serves as cofactor. It depends on Mn(2+) as a cofactor. The cofactor is Zn(2+).

The catalysed reaction is a 5'-end NAD(+)-phospho-ribonucleoside in mRNA + H2O = a 5'-end phospho-adenosine-phospho-ribonucleoside in mRNA + beta-nicotinamide D-ribonucleotide + 2 H(+). It carries out the reaction NAD(+) + H2O = beta-nicotinamide D-ribonucleotide + AMP + 2 H(+). It catalyses the reaction NADH + H2O = reduced beta-nicotinamide D-ribonucleotide + AMP + 2 H(+). In terms of biological role, mRNA decapping enzyme that specifically removes the nicotinamide adenine dinucleotide (NAD) cap from a subset of mRNAs by hydrolyzing the diphosphate linkage to produce nicotinamide mononucleotide (NMN) and 5' monophosphate mRNA. The NAD-cap is present at the 5'-end of some mRNAs and stabilizes RNA against 5'-processing. Has preference for mRNAs with a 5'-end purine. Catalyzes the hydrolysis of a broad range of dinucleotide pyrophosphates. This chain is NAD-capped RNA hydrolase NudC, found in Haemophilus influenzae (strain 86-028NP).